Consider the following 231-residue polypeptide: Adenosylcobinamide-GDP ribazoletransferase (231 aa).

5 helical membrane passes run L28–I48, T97–Y117, F121–L141, V162–A182, and V209–G229.

Belongs to the CobS family. It depends on Mg(2+) as a cofactor.

Its subcellular location is the cell membrane. The enzyme catalyses alpha-ribazole + adenosylcob(III)inamide-GDP = adenosylcob(III)alamin + GMP + H(+). The catalysed reaction is alpha-ribazole 5'-phosphate + adenosylcob(III)inamide-GDP = adenosylcob(III)alamin 5'-phosphate + GMP + H(+). Its pathway is cofactor biosynthesis; adenosylcobalamin biosynthesis; adenosylcobalamin from cob(II)yrinate a,c-diamide: step 7/7. Joins adenosylcobinamide-GDP and alpha-ribazole to generate adenosylcobalamin (Ado-cobalamin). Also synthesizes adenosylcobalamin 5'-phosphate from adenosylcobinamide-GDP and alpha-ribazole 5'-phosphate. The protein is Adenosylcobinamide-GDP ribazoletransferase (cobS2) of Archaeoglobus fulgidus (strain ATCC 49558 / DSM 4304 / JCM 9628 / NBRC 100126 / VC-16).